Here is a 623-residue protein sequence, read N- to C-terminus: Protein FAM234B (623 aa).

A disordered region spans residues 1-82; it reads MATVLSRALK…TSERAPEGYP (82 aa). The helical transmembrane segment at 104-124 threads the bilayer; sequence AVFLLTVVISMILVLVCAFLI.

Belongs to the FAM234 family.

The protein localises to the membrane. It is found in the golgi outpost. Its subcellular location is the cytoplasm. It localises to the cytoskeleton. The protein resides in the microtubule organizing center. In Gallus gallus (Chicken), this protein is Protein FAM234B (FAM234B).